The following is a 612-amino-acid chain: Probable cytosolic Fe-S cluster assembly factor SJAG_02895 (612 aa).

ATP is bound at residue 13–20 (GKGGVGKS). [4Fe-4S] cluster is bound by residues Cys200 and Cys203. WD repeat units follow at residues 287 to 326 (GHRGRIWSVAVHPTLPLVATASEDKSVRVFQAQTGELIHV), 330 to 370 (YHTR…WECV), 375 to 414 (GHENEVKCVAWSHDGVYLATCSRDKSVWIWEAMEDDEFDC), 420 to 459 (EHTQDVKVVAWHPKDDLLVSGSYDNTIRFWRDDGDDWVQT), 464 to 503 (SHTSTVWALNFSPDGRLLASGDGEGEVFIWEKLVSNEDAA), 528 to 566 (TFTEPVYTLGWKDDHTLCASGAEGTIGLFAYEDDVSTWH), and 574 to 612 (AHDVYEINTIAWTNDSRLLSGGDDGLCNVWKLSEADQTA).

This sequence in the N-terminal section; belongs to the Mrp/NBP35 ATP-binding proteins family. NUBP2/CFD1 subfamily. In the C-terminal section; belongs to the WD repeat CIA1 family. Heterotetramer of 2 nbp35 and 2 SJAG_02895 chains. Requires [4Fe-4S] cluster as cofactor.

The protein localises to the cytoplasm. It localises to the nucleus. Fusion protein of two essential components of the cytosolic iron-sulfur (Fe/S) protein assembly (CIA) machinery. Required for maturation of extramitochondrial Fe-S proteins. May form a heterotetramer with nubp35, functioning as a Fe-S scaffold complex, mediating the de novo assembly of an Fe-S cluster and its transfer to target apoproteins. The polypeptide is Probable cytosolic Fe-S cluster assembly factor SJAG_02895 (Schizosaccharomyces japonicus (strain yFS275 / FY16936) (Fission yeast)).